The chain runs to 1368 residues: DNA-directed RNA polymerase subunit beta (1368 aa).

The protein belongs to the RNA polymerase beta chain family. The RNAP catalytic core consists of 2 alpha, 1 beta, 1 beta' and 1 omega subunit. When a sigma factor is associated with the core the holoenzyme is formed, which can initiate transcription.

It carries out the reaction RNA(n) + a ribonucleoside 5'-triphosphate = RNA(n+1) + diphosphate. Functionally, DNA-dependent RNA polymerase catalyzes the transcription of DNA into RNA using the four ribonucleoside triphosphates as substrates. The protein is DNA-directed RNA polymerase subunit beta of Burkholderia cenocepacia (strain ATCC BAA-245 / DSM 16553 / LMG 16656 / NCTC 13227 / J2315 / CF5610) (Burkholderia cepacia (strain J2315)).